Here is a 283-residue protein sequence, read N- to C-terminus: Pantothenate synthetase (283 aa).

30–37 (MGALHRGH) is a binding site for ATP. His37 (proton donor) is an active-site residue. Position 61 (Gln61) interacts with (R)-pantoate. Gln61 contributes to the beta-alanine binding site. 147-150 (GQKD) lines the ATP pocket. Gln153 is a binding site for (R)-pantoate. ATP contacts are provided by residues Ile176 and 184-187 (MSSR).

The protein belongs to the pantothenate synthetase family. Homodimer.

The protein localises to the cytoplasm. It catalyses the reaction (R)-pantoate + beta-alanine + ATP = (R)-pantothenate + AMP + diphosphate + H(+). Its pathway is cofactor biosynthesis; (R)-pantothenate biosynthesis; (R)-pantothenate from (R)-pantoate and beta-alanine: step 1/1. Catalyzes the condensation of pantoate with beta-alanine in an ATP-dependent reaction via a pantoyl-adenylate intermediate. The sequence is that of Pantothenate synthetase from Cytophaga hutchinsonii (strain ATCC 33406 / DSM 1761 / CIP 103989 / NBRC 15051 / NCIMB 9469 / D465).